The sequence spans 300 residues: SNAP25 homologous protein SNAP33 (300 aa).

2 disordered regions span residues 1 to 76 (MFGL…QSLF) and 176 to 228 (WKPK…PESA). Ser29 is modified (phosphoserine). Over residues 38 to 49 (TLNPSKRTTSEP) the composition is skewed to polar residues. Positions 190–208 (TRDDSPTRRVNHLEKREKL) are enriched in basic and acidic residues. Residues 235-297 (EMEKAKQDDG…QQSNQRGRRL (63 aa)) form the t-SNARE coiled-coil homology domain.

It belongs to the SNAP-25 family. Interacts with the cytokinesis-specific syntaxin KNOLLE and with SYP121. Binds to EXO70B2. Ubiquitous, with a strong expression in root tips, ovules, very young leaves, vascular tissue, hydathodes, stipules and the abscission and dehiscence zones of the siliques.

Its subcellular location is the membrane. Functionally, t-SNARE involved in diverse vesicle trafficking and membrane fusion processes, including cell plate formation. May function in the secretory pathway. This Arabidopsis thaliana (Mouse-ear cress) protein is SNAP25 homologous protein SNAP33.